The sequence spans 513 residues: ATP synthase subunit beta (513 aa).

Residues 1-29 (MATAPATEKKAPAKKAAAPKAAAPKKAAA) are disordered. Positions 14 to 29 (KKAAAPKAAAPKKAAA) are enriched in low complexity. 186-193 (GGAGVGKT) lines the ATP pocket.

It belongs to the ATPase alpha/beta chains family. F-type ATPases have 2 components, CF(1) - the catalytic core - and CF(0) - the membrane proton channel. CF(1) has five subunits: alpha(3), beta(3), gamma(1), delta(1), epsilon(1). CF(0) has three main subunits: a(1), b(2) and c(9-12). The alpha and beta chains form an alternating ring which encloses part of the gamma chain. CF(1) is attached to CF(0) by a central stalk formed by the gamma and epsilon chains, while a peripheral stalk is formed by the delta and b chains.

The protein localises to the cell inner membrane. The enzyme catalyses ATP + H2O + 4 H(+)(in) = ADP + phosphate + 5 H(+)(out). Produces ATP from ADP in the presence of a proton gradient across the membrane. The catalytic sites are hosted primarily by the beta subunits. The chain is ATP synthase subunit beta from Sphingopyxis alaskensis (strain DSM 13593 / LMG 18877 / RB2256) (Sphingomonas alaskensis).